Consider the following 87-residue polypeptide: Mitotic-spindle organizing protein 1 (87 aa).

It belongs to the MOZART1 family. As to quaternary structure, part of the gamma-tubulin complex.

The protein localises to the cytoplasm. The protein resides in the cytoskeleton. It localises to the microtubule organizing center. It is found in the spindle pole body. In terms of biological role, required for gamma-tubulin complex recruitment to the microtubule organizing center (MTOC). In Chaetomium globosum (strain ATCC 6205 / CBS 148.51 / DSM 1962 / NBRC 6347 / NRRL 1970) (Soil fungus), this protein is Mitotic-spindle organizing protein 1.